Reading from the N-terminus, the 182-residue chain is FMN reductase (NADH) RutF (182 aa).

Belongs to the non-flavoprotein flavin reductase family. RutF subfamily.

It carries out the reaction FMNH2 + NAD(+) = FMN + NADH + 2 H(+). Catalyzes the reduction of FMN to FMNH2 which is used to reduce pyrimidine by RutA via the Rut pathway. The chain is FMN reductase (NADH) RutF from Yersinia enterocolitica serotype O:8 / biotype 1B (strain NCTC 13174 / 8081).